A 682-amino-acid chain; its full sequence is Elongation factor G (682 aa).

One can recognise a tr-type G domain in the interval 8-282; it reads QKFRNFGIMA…AVVDYLPSPV (275 aa). Residues 17-24, 81-85, and 135-138 each bind GTP; these read AHIDAGKT, DTPGH, and NKMD.

It belongs to the TRAFAC class translation factor GTPase superfamily. Classic translation factor GTPase family. EF-G/EF-2 subfamily.

The protein resides in the cytoplasm. Its function is as follows. Catalyzes the GTP-dependent ribosomal translocation step during translation elongation. During this step, the ribosome changes from the pre-translocational (PRE) to the post-translocational (POST) state as the newly formed A-site-bound peptidyl-tRNA and P-site-bound deacylated tRNA move to the P and E sites, respectively. Catalyzes the coordinated movement of the two tRNA molecules, the mRNA and conformational changes in the ribosome. The polypeptide is Elongation factor G (Malacoplasma penetrans (strain HF-2) (Mycoplasma penetrans)).